The primary structure comprises 2448 residues: Non-reducing polyketide synthase mapC (2448 aa).

An N-terminal acylcarrier protein transacylase domain (SAT) region spans residues 14–226 (VLFGPQCPDI…HHEAHREGIQ (213 aa)). The segment at 330-350 (GFSNESPQPSTASLSNSVQTF) is disordered. Residues 359–775 (ASPIAITGMA…GSNAALIVKE (417 aa)) form the Ketosynthase family 3 (KS3) domain. Residues Cys524, His659, and His698 each act as for beta-ketoacyl synthase activity in the active site. The malonyl-CoA:ACP transacylase (MAT) domain stretch occupies residues 885 to 1188 (LCFGGQNGLT…HKIDLGGSSG (304 aa)). Ser972 serves as the catalytic For acyl/malonyl transferase activity. An N-terminal hotdog fold region spans residues 1256–1388 (GQEAGLLCQL…GTVCLHQERS (133 aa)). Residues 1256-1565 (GQEAGLLCQL…FTSVSIRSLT (310 aa)) enclose the PKS/mFAS DH domain. The segment at 1261 to 1564 (LLCQLSESPD…RFTSVSIRSL (304 aa)) is product template (PT) domain. His1290 serves as the catalytic Proton acceptor; for dehydratase activity. The interval 1414–1565 (ASNGLKGSTV…FTSVSIRSLT (152 aa)) is C-terminal hotdog fold. Asp1471 functions as the Proton donor; for dehydratase activity in the catalytic mechanism. The Carrier domain occupies 1610-1684 (AKDLATVQEM…GLVEHIFPGH (75 aa)). At Ser1644 the chain carries O-(pantetheine 4'-phosphoryl)serine. Residues 1841 to 2076 (PYALEHDLLQ…GFEWVDWTNN (236 aa)) are methyltransferase (CMeT) domain. Active-site for thioesterase activity residues include Ser2227, Asp2385, and His2417.

The protein resides in the cytoplasm. It is found in the cytosol. The enzyme catalyses 3 malonyl-CoA + acetyl-CoA + S-adenosyl-L-methionine + H(+) = 5-methylorsellinate + S-adenosyl-L-homocysteine + 3 CO2 + 4 CoA. Its pathway is secondary metabolite biosynthesis; terpenoid biosynthesis. Its function is as follows. Non-reducing polyketide synthase; part of the gene cluster that mediates the biosynthesis of mycophenolic acid (MPA), the first isolated antibiotic natural product in the world obtained from a culture of Penicillium brevicompactum in 1893. MpaC catalyzes the synthesis of 5-methylorsellinic acid (5MOA) via the condensation of 1 acetyl-CoA starter unit with 3 malonyl-CoA units and one methylation step. The first step of the pathway is the synthesis of 5-methylorsellinic acid (5MOA) by the cytosolic polyketide synthase mpaC. 5MOA is then converted to the phthalide compound 5,7-dihydroxy-4,6-dimethylphthalide (DHMP) by the endoplasmic reticulum-bound cytochrome P450 monooxygenase mpaDE. MpaDE first catalyzes hydroxylation of 5-MOA to 4,6-dihydroxy-2-(hydroxymethyl)-3-methylbenzoic acid (DHMB). MpaDE then acts as a lactone synthase that catalyzes the ring closure to convert DHMB into DHMP. The next step is the prenylation of DHMP by the Golgi apparatus-associated prenyltransferase mpaA to yield farnesyl-DHMP (FDHMP). The ER-bound oxygenase mpaB then mediates the oxidative cleavage the C19-C20 double bond in FDHMP to yield FDHMP-3C via a mycophenolic aldehyde intermediate. The O-methyltransferase mpaG catalyzes the methylation of FDHMP-3C to yield MFDHMP-3C. After the cytosolic methylation of FDHMP-3C, MFDHMP-3C enters into peroxisomes probably via free diffusion due to its low molecular weight. Upon a peroxisomal CoA ligation reaction, catalyzed by a beta-oxidation component enzyme acyl-CoA ligase ACL891, MFDHMP-3C-CoA would then be restricted to peroxisomes for the following beta-oxidation pathway steps. The peroxisomal beta-oxidation machinery than converts MFDHMP-3C-CoA into MPA_CoA, via a beta-oxidation chain-shortening process. Finally mpaH acts as a peroxisomal acyl-CoA hydrolase with high substrate specificity toward MPA-CoA to release the final product MPA. In Penicillium brevicompactum, this protein is Non-reducing polyketide synthase mapC.